Here is a 289-residue protein sequence, read N- to C-terminus: Protease HtpX homolog (289 aa).

2 helical membrane-spanning segments follow: residues 5–27 (LWVRTGLLMAFLTGLLVGIGYLI) and 40–60 (ALFMNFFSYWFSDSIVLSWYN). Residue H133 coordinates Zn(2+). The active site involves E134. H137 serves as a coordination point for Zn(2+). A run of 2 helical transmembrane segments spans residues 143–163 (TLIQTIAAVLAGAIMVLVNFA) and 181–201 (IVALILAIILAPIAATLIQLA). E207 lines the Zn(2+) pocket.

Belongs to the peptidase M48B family. Requires Zn(2+) as cofactor.

The protein resides in the cell membrane. In Pyrococcus furiosus (strain ATCC 43587 / DSM 3638 / JCM 8422 / Vc1), this protein is Protease HtpX homolog.